A 459-amino-acid polypeptide reads, in one-letter code: tRNA modification GTPase MnmE (459 aa).

(6S)-5-formyl-5,6,7,8-tetrahydrofolate contacts are provided by R20, E85, and R124. The 160-residue stretch at 221–380 folds into the TrmE-type G domain; the sequence is GISTVIIGRP…LEEAIQSLFF (160 aa). N231 contacts K(+). Residues 231-236, 250-256, and 275-278 contribute to the GTP site; these read NVGKSS, TDIPGTT, and DTAG. S235 serves as a coordination point for Mg(2+). K(+) is bound by residues T250, I252, and T255. T256 is a Mg(2+) binding site. A (6S)-5-formyl-5,6,7,8-tetrahydrofolate-binding site is contributed by K459.

This sequence belongs to the TRAFAC class TrmE-Era-EngA-EngB-Septin-like GTPase superfamily. TrmE GTPase family. In terms of assembly, homodimer. Heterotetramer of two MnmE and two MnmG subunits. The cofactor is K(+).

Its subcellular location is the cytoplasm. In terms of biological role, exhibits a very high intrinsic GTPase hydrolysis rate. Involved in the addition of a carboxymethylaminomethyl (cmnm) group at the wobble position (U34) of certain tRNAs, forming tRNA-cmnm(5)s(2)U34. The chain is tRNA modification GTPase MnmE from Bacillus licheniformis (strain ATCC 14580 / DSM 13 / JCM 2505 / CCUG 7422 / NBRC 12200 / NCIMB 9375 / NCTC 10341 / NRRL NRS-1264 / Gibson 46).